An 893-amino-acid polypeptide reads, in one-letter code: MNKHHPKLRSFYSIRKSTLGVASVIVSTLFLITSQHQAQAAENTNTSDKISENQNSNATTTQPPKDTNQTQPATQPANTAKTYPAADESLKDAIKNPAVENKEHDIGPREQVNFLLLDKNNETQYYHFFSIKDPADVYYTKKKAEVELDINTASTWKKFEVYENNQKLPVRLVSYSPVPEDHAYIRFPVSDGTQELKIVSSTQIDDGAETNYDYTKLVFAKPIYNDPSLVKSDTNDAVATNDQSSSDASNQTNTNTSNQNTSTTNNTSDQPQATTNMSQPAQPKLSANADQASSQPAHETNSNGNTNDKTNESSNQSDVNQQYPPADESLQDAIKNPAIIDKEHTADNWRPIDFQMKNDKGERQFYHYASTVEPATVIFTKTGPIIELGLKTALTWKKLEVYEGDKKLPVELVSYDSDKDYAYIRFPVSNGTREVKIVSSIEYGENIHEDYDYTLMVFAQPITNNPDDYVDEETYNLQKLLAPYHKAKTLERQVYELEKLQEKLPEKYKAEYKKKLDQTRVELADQVKSAVTEFENVTPTNDQLTDVQEAHFVVFESEENNESVMDGFVEHPFYTATLNGQKYVVMKTKDDSYWKDLIVEGKRVTTVSKDTKNNSRTLIFPYIPDKAVYNAIVKVVVANIGYEGQYHVRIINQDIKTKDDDTSQNNTSEHLNGQTVQEDNVTATDTATNNSIETTPREATDKVDLIEPESDMVKDADSSVDKDAHHDVDHLSDMSGNTHFDKYDLKEMDTQIAKDTDKGVDNSVGMSSNVDTDKDSNKNKDKVIQLDHIADKNKVNNTGTETNIDTMKYHPISTIKVTDKKTTEHLPSDIHKTVDKTVKTKEKASTPSKENKLSQSKMLPKTGETTSSQSWWSLYALLGMLALFIPKFRKESK.

The N-terminal stretch at 1-40 (MNKHHPKLRSFYSIRKSTLGVASVIVSTLFLITSQHQAQA) is a signal peptide. Residues 42 to 81 (ENTNTSDKISENQNSNATTTQPPKDTNQTQPATQPANTAK) show a composition bias toward polar residues. Disordered regions lie at residues 42–84 (ENTN…KTYP) and 226–324 (DPSL…QQYP). The NEAT 1 domain occupies 105–232 (DIGPREQVNF…IYNDPSLVKS (128 aa)). Over residues 239-270 (ATNDQSSSDASNQTNTNTSNQNTSTTNNTSDQ) the composition is skewed to low complexity. 2 stretches are compositionally biased toward polar residues: residues 271 to 281 (PQATTNMSQPA) and 288 to 323 (NADQ…NQQY). NEAT domains are found at residues 345 to 471 (TADN…DYVD) and 543 to 660 (QLTD…TKDD). Disordered regions lie at residues 658–696 (KDDD…ETTP), 713–733 (VKDA…HLSD), 754–778 (KDTD…DSNK), and 837–865 (TVKT…TGET). Residues 663–678 (SQNNTSEHLNGQTVQE) are compositionally biased toward polar residues. Low complexity predominate over residues 679 to 690 (DNVTATDTATNN). Residues 713-732 (VKDADSSVDKDAHHDVDHLS) are compositionally biased toward basic and acidic residues. The span at 837 to 852 (TVKTKEKASTPSKENK) shows a compositional bias: basic and acidic residues. A compositionally biased stretch (polar residues) spans 853-865 (LSQSKMLPKTGET). The short motif at 859-863 (LPKTG) is the LPXTG sorting signal element. At threonine 862 the chain carries Pentaglycyl murein peptidoglycan amidated threonine. A propeptide spans 863 to 893 (GETTSSQSWWSLYALLGMLALFIPKFRKESK) (removed by sortase).

Belongs to the IsdH family.

Its subcellular location is the secreted. It is found in the cell wall. In terms of biological role, binds human plasma haptoglobin-hemoglobin complexes, haptoglobin and hemoglobin. Binds haptoglobin-hemoglobin complexes with significantly higher affinity than haptoglobin alone. The polypeptide is Iron-regulated surface determinant protein H (isdH) (Staphylococcus aureus (strain bovine RF122 / ET3-1)).